Reading from the N-terminus, the 873-residue chain is Probable beta-glucosidase A (873 aa).

The signal sequence occupies residues 1–19 (MRFGWLEVAALTAASVANA). N-linked (GlcNAc...) asparagine glycosylation is found at N71, N222, and N263. D291 is an active-site residue. N326, N333, N365, N453, N534, N553, N575, N679, and N725 each carry an N-linked (GlcNAc...) asparagine glycan. Positions 730–765 (EDSSDDPNYGWEDSEYIPEGARDGSPQPLLKAGGAP) are disordered.

This sequence belongs to the glycosyl hydrolase 3 family.

It localises to the secreted. It carries out the reaction Hydrolysis of terminal, non-reducing beta-D-glucosyl residues with release of beta-D-glucose.. It participates in glycan metabolism; cellulose degradation. Beta-glucosidases are one of a number of cellulolytic enzymes involved in the degradation of cellulosic biomass. Catalyzes the last step releasing glucose from the inhibitory cellobiose. The chain is Probable beta-glucosidase A (bglA) from Neosartorya fischeri (strain ATCC 1020 / DSM 3700 / CBS 544.65 / FGSC A1164 / JCM 1740 / NRRL 181 / WB 181) (Aspergillus fischerianus).